We begin with the raw amino-acid sequence, 683 residues long: Outer dynein arm-docking complex subunit 4 (683 aa).

TPR repeat units follow at residues phenylalanine 13–aspartate 46, lysine 47–phenylalanine 80, asparagine 48–phenylalanine 80, and cysteine 81–arginine 114. The segment at glutamine 158 to glycine 179 is disordered. Residues leucine 167 to glycine 179 are compositionally biased toward basic residues. TPR repeat units lie at residues leucine 275–glutamate 311, glycine 320–tyrosine 353, serine 360–threonine 393, threonine 397–glutamate 430, and leucine 437–valine 470. Disordered regions lie at residues glutamate 510–valine 537 and valine 553–glutamate 683. Basic and acidic residues-rich tracts occupy residues threonine 521–valine 537, proline 566–proline 590, glycine 602–glutamate 620, and serine 629–aspartate 675. A TPR 15 repeat occupies aspartate 592 to leucine 625.

As to quaternary structure, component of the outer dynein arm-docking complex along with ODAD1, ODAD2 and ODAD3. Interacts with ODAD1; this interaction may facilitate the recruitment and/or attachment of outer dynein arm docking complex proteins, including ODAD1, ODAD3 and ODAD2, to ciliary axonemes. Interacts with components of the IFT complex A, including IFT140, TTC21B/IFT139 and WDR19/IFT144, and the IFT complex B, including IFT46, IFT52 and IFT57. Interacts with CFAP53. In terms of tissue distribution, expressed in trachea multiciliated cells.

It localises to the cytoplasm. The protein localises to the cytoskeleton. The protein resides in the cilium axoneme. Functionally, component of the outer dynein arm-docking complex (ODA-DC) that mediates outer dynein arms (ODA) binding onto the doublet microtubule. Plays an essential role for the assembly of ODA-DC and for the docking of ODA in ciliary axoneme. This chain is Outer dynein arm-docking complex subunit 4, found in Bos taurus (Bovine).